The primary structure comprises 399 residues: Elongation factor Tu (399 aa).

The region spanning 10–204 (KPHVNIGTIG…SVDESIPEPE (195 aa)) is the tr-type G domain. The segment at 19–26 (GHVDHGKT) is G1. 19 to 26 (GHVDHGKT) provides a ligand contact to GTP. Thr26 contributes to the Mg(2+) binding site. Residues 60-64 (GITIN) are G2. The interval 81–84 (DCPG) is G3. Residues 81–85 (DCPGH) and 136–139 (NKCD) each bind GTP. The interval 136 to 139 (NKCD) is G4. The interval 174-176 (SAL) is G5.

The protein belongs to the TRAFAC class translation factor GTPase superfamily. Classic translation factor GTPase family. EF-Tu/EF-1A subfamily. As to quaternary structure, monomer.

Its subcellular location is the cytoplasm. The enzyme catalyses GTP + H2O = GDP + phosphate + H(+). Functionally, GTP hydrolase that promotes the GTP-dependent binding of aminoacyl-tRNA to the A-site of ribosomes during protein biosynthesis. The polypeptide is Elongation factor Tu (Prochlorococcus marinus (strain MIT 9211)).